Consider the following 138-residue polypeptide: Putative pre-16S rRNA nuclease (138 aa).

This sequence belongs to the YqgF nuclease family.

It is found in the cytoplasm. Could be a nuclease involved in processing of the 5'-end of pre-16S rRNA. This chain is Putative pre-16S rRNA nuclease, found in Haemophilus ducreyi (strain 35000HP / ATCC 700724).